The chain runs to 205 residues: Holliday junction branch migration complex subunit RuvA (205 aa).

Residues 1-64 are domain I; the sequence is MIGKLKGLID…EDQIKLFGFR (64 aa). The tract at residues 65–143 is domain II; that stretch reads TDHEREWFRL…ALSNVDPAVV (79 aa). The interval 144 to 154 is flexible linker; it reads QLSGALDDNRA. Residues 154 to 205 form a domain III region; it reads APRPVTDAISALVNLGYGQPQAAAAIAAAARAAGDDAATAQLIKLGLKELSK.

Belongs to the RuvA family. As to quaternary structure, homotetramer. Forms an RuvA(8)-RuvB(12)-Holliday junction (HJ) complex. HJ DNA is sandwiched between 2 RuvA tetramers; dsDNA enters through RuvA and exits via RuvB. An RuvB hexamer assembles on each DNA strand where it exits the tetramer. Each RuvB hexamer is contacted by two RuvA subunits (via domain III) on 2 adjacent RuvB subunits; this complex drives branch migration. In the full resolvosome a probable DNA-RuvA(4)-RuvB(12)-RuvC(2) complex forms which resolves the HJ.

It is found in the cytoplasm. Its function is as follows. The RuvA-RuvB-RuvC complex processes Holliday junction (HJ) DNA during genetic recombination and DNA repair, while the RuvA-RuvB complex plays an important role in the rescue of blocked DNA replication forks via replication fork reversal (RFR). RuvA specifically binds to HJ cruciform DNA, conferring on it an open structure. The RuvB hexamer acts as an ATP-dependent pump, pulling dsDNA into and through the RuvAB complex. HJ branch migration allows RuvC to scan DNA until it finds its consensus sequence, where it cleaves and resolves the cruciform DNA. In Rhodopseudomonas palustris (strain BisB5), this protein is Holliday junction branch migration complex subunit RuvA.